The following is a 228-amino-acid chain: Deoxyribose-phosphate aldolase (228 aa).

D96 functions as the Proton donor/acceptor in the catalytic mechanism. K157 serves as the catalytic Schiff-base intermediate with acetaldehyde. Residue K185 is the Proton donor/acceptor of the active site.

Belongs to the DeoC/FbaB aldolase family. DeoC type 1 subfamily.

It localises to the cytoplasm. The enzyme catalyses 2-deoxy-D-ribose 5-phosphate = D-glyceraldehyde 3-phosphate + acetaldehyde. It functions in the pathway carbohydrate degradation; 2-deoxy-D-ribose 1-phosphate degradation; D-glyceraldehyde 3-phosphate and acetaldehyde from 2-deoxy-alpha-D-ribose 1-phosphate: step 2/2. In terms of biological role, catalyzes a reversible aldol reaction between acetaldehyde and D-glyceraldehyde 3-phosphate to generate 2-deoxy-D-ribose 5-phosphate. This Cyanothece sp. (strain PCC 7425 / ATCC 29141) protein is Deoxyribose-phosphate aldolase.